The sequence spans 181 residues: Protein OPG005 (181 aa).

In Vaccinia virus (strain Copenhagen) (VACV), this protein is Protein OPG005 (OPG005).